Here is a 47-residue protein sequence, read N- to C-terminus: Small, acid-soluble spore protein K (47 aa).

Positions 1 to 47 (MRNKAHGFPHRISFDGEPDRAKHASKRANGTINTKPQERMHQANPDQ) are disordered. Over residues 12–22 (ISFDGEPDRAK) the composition is skewed to basic and acidic residues.

Belongs to the SspK family.

It localises to the spore core. The protein is Small, acid-soluble spore protein K of Halalkalibacterium halodurans (strain ATCC BAA-125 / DSM 18197 / FERM 7344 / JCM 9153 / C-125) (Bacillus halodurans).